A 226-amino-acid polypeptide reads, in one-letter code: Transcriptional regulatory protein CitT (226 aa).

Residues 3–119 (HIAIAEDDFR…KFRQVLLQYK (117 aa)) form the Response regulatory domain. D54 bears the 4-aspartylphosphate mark. The segment at residues 178-197 (AEELGEKMGASRTTARRYAE) is a DNA-binding region (H-T-H motif).

Phosphorylated by CitS.

It localises to the cytoplasm. In terms of biological role, member of the two-component regulatory system CitT/CitS. Regulates the expression of the citM-yflN operon. Phosphorylated CitT binds to the citM promoter to activate the transcription of the citM-yflN operon. The protein is Transcriptional regulatory protein CitT (citT) of Bacillus subtilis (strain 168).